Consider the following 496-residue polypeptide: Probable ATP-dependent DNA helicase RecS (496 aa).

In terms of domain architecture, Helicase ATP-binding spans 25–192 (IESILSGKDT…MNLLELQHAV (168 aa)). 38 to 45 (LPTGGGKS) provides a ligand contact to ATP. The DEAH box signature appears at 136–139 (DEAH). One can recognise a Helicase C-terminal domain in the interval 219-363 (RVIQLVENLQ…EIADVIRVLE (145 aa)).

It belongs to the helicase family. RecQ subfamily. Interacts with SSB (ssbA) and YpbB.

It localises to the cytoplasm. The protein resides in the nucleoid. It catalyses the reaction Couples ATP hydrolysis with the unwinding of duplex DNA by translocating in the 3'-5' direction.. The catalysed reaction is ATP + H2O = ADP + phosphate + H(+). Functionally, probable 3'-5' DNA helicase. Required in synaptic and/or post-synaptic stages of recombination. Probably has an overlapping function with RecQ. It probably acts to help generate ss-DNA from ds-DNA breaks. The sequence is that of Probable ATP-dependent DNA helicase RecS from Bacillus subtilis (strain 168).